The sequence spans 406 residues: Exodeoxyribonuclease 7 large subunit (406 aa).

It belongs to the XseA family. In terms of assembly, heterooligomer composed of large and small subunits.

The protein localises to the cytoplasm. The catalysed reaction is Exonucleolytic cleavage in either 5'- to 3'- or 3'- to 5'-direction to yield nucleoside 5'-phosphates.. Functionally, bidirectionally degrades single-stranded DNA into large acid-insoluble oligonucleotides, which are then degraded further into small acid-soluble oligonucleotides. This is Exodeoxyribonuclease 7 large subunit from Desulfitobacterium hafniense (strain Y51).